The following is a 368-amino-acid chain: Phosphate acyltransferase (368 aa).

The segment at 337–368 (LGEGEHNAGGAGHASPAAGHHAEPSAAQSSKA) is disordered. Residues 349 to 368 (HASPAAGHHAEPSAAQSSKA) show a composition bias toward low complexity.

Belongs to the PlsX family. As to quaternary structure, homodimer. Probably interacts with PlsY.

It localises to the cytoplasm. It catalyses the reaction a fatty acyl-[ACP] + phosphate = an acyl phosphate + holo-[ACP]. Its pathway is lipid metabolism; phospholipid metabolism. Its function is as follows. Catalyzes the reversible formation of acyl-phosphate (acyl-PO(4)) from acyl-[acyl-carrier-protein] (acyl-ACP). This enzyme utilizes acyl-ACP as fatty acyl donor, but not acyl-CoA. The polypeptide is Phosphate acyltransferase (Burkholderia lata (strain ATCC 17760 / DSM 23089 / LMG 22485 / NCIMB 9086 / R18194 / 383)).